Here is a 747-residue protein sequence, read N- to C-terminus: Polyribonucleotide nucleotidyltransferase (747 aa).

Mg(2+) is bound by residues D487 and D493. Residues 554 to 613 (PSTTTIKIDKDKIRDIIGPGGKIIKEICETSGAKIDISDDGTVSVYAADRDKLKIASDKI) enclose the KH domain. Positions 623-691 (GEIFNGTVTK…NKGKAKLTIK (69 aa)) constitute an S1 motif domain. The segment at 694-716 (DKDKSLNNPKPQNSINNAKENSE) is disordered. Residues 699–712 (LNNPKPQNSINNAK) are compositionally biased toward polar residues.

This sequence belongs to the polyribonucleotide nucleotidyltransferase family. Mg(2+) is required as a cofactor.

The protein resides in the cytoplasm. It catalyses the reaction RNA(n+1) + phosphate = RNA(n) + a ribonucleoside 5'-diphosphate. Its function is as follows. Involved in mRNA degradation. Catalyzes the phosphorolysis of single-stranded polyribonucleotides processively in the 3'- to 5'-direction. The polypeptide is Polyribonucleotide nucleotidyltransferase (Rickettsia canadensis (strain McKiel)).